Here is a 471-residue protein sequence, read N- to C-terminus: Argininosuccinate lyase (471 aa).

This sequence belongs to the lyase 1 family. Argininosuccinate lyase subfamily.

It is found in the cytoplasm. It carries out the reaction 2-(N(omega)-L-arginino)succinate = fumarate + L-arginine. It participates in amino-acid biosynthesis; L-arginine biosynthesis; L-arginine from L-ornithine and carbamoyl phosphate: step 3/3. The protein is Argininosuccinate lyase of Ralstonia pickettii (strain 12J).